We begin with the raw amino-acid sequence, 145 residues long: D-aminoacyl-tRNA deacylase (145 aa).

The Gly-cisPro motif, important for rejection of L-amino acids signature appears at 137-138 (GP).

The protein belongs to the DTD family. As to quaternary structure, homodimer.

The protein resides in the cytoplasm. It carries out the reaction glycyl-tRNA(Ala) + H2O = tRNA(Ala) + glycine + H(+). It catalyses the reaction a D-aminoacyl-tRNA + H2O = a tRNA + a D-alpha-amino acid + H(+). Functionally, an aminoacyl-tRNA editing enzyme that deacylates mischarged D-aminoacyl-tRNAs. Also deacylates mischarged glycyl-tRNA(Ala), protecting cells against glycine mischarging by AlaRS. Acts via tRNA-based rather than protein-based catalysis; rejects L-amino acids rather than detecting D-amino acids in the active site. By recycling D-aminoacyl-tRNA to D-amino acids and free tRNA molecules, this enzyme counteracts the toxicity associated with the formation of D-aminoacyl-tRNA entities in vivo and helps enforce protein L-homochirality. The sequence is that of D-aminoacyl-tRNA deacylase from Legionella pneumophila (strain Paris).